The chain runs to 454 residues: Bifunctional protein GlmU (454 aa).

Positions 1 to 240 are pyrophosphorylase; the sequence is MNVSVVILAA…EEEFMGVNSK (240 aa). Residues 8–11, lysine 22, and 87–88 contribute to the UDP-N-acetyl-alpha-D-glucosamine site; these read LAAG and GT. Aspartate 119 serves as a coordination point for Mg(2+). Residues glycine 152, glutamate 166, asparagine 181, and asparagine 238 each coordinate UDP-N-acetyl-alpha-D-glucosamine. Mg(2+) is bound at residue asparagine 238. A linker region spans residues 241 to 261; the sequence is IQLACAQEIMLQRLREKAMEQ. The N-acetyltransferase stretch occupies residues 262 to 454; it reads GVIMNLPHTI…SDKNEEKKEQ (193 aa). Residues arginine 325 and lysine 342 each coordinate UDP-N-acetyl-alpha-D-glucosamine. Histidine 353 (proton acceptor) is an active-site residue. UDP-N-acetyl-alpha-D-glucosamine contacts are provided by tyrosine 356 and asparagine 367. Acetyl-CoA contacts are provided by residues alanine 370, 376-377, serine 395, alanine 413, and arginine 430; that span reads NY.

The protein in the N-terminal section; belongs to the N-acetylglucosamine-1-phosphate uridyltransferase family. It in the C-terminal section; belongs to the transferase hexapeptide repeat family. As to quaternary structure, homotrimer. Mg(2+) is required as a cofactor.

It is found in the cytoplasm. The enzyme catalyses alpha-D-glucosamine 1-phosphate + acetyl-CoA = N-acetyl-alpha-D-glucosamine 1-phosphate + CoA + H(+). It carries out the reaction N-acetyl-alpha-D-glucosamine 1-phosphate + UTP + H(+) = UDP-N-acetyl-alpha-D-glucosamine + diphosphate. The protein operates within nucleotide-sugar biosynthesis; UDP-N-acetyl-alpha-D-glucosamine biosynthesis; N-acetyl-alpha-D-glucosamine 1-phosphate from alpha-D-glucosamine 6-phosphate (route II): step 2/2. It functions in the pathway nucleotide-sugar biosynthesis; UDP-N-acetyl-alpha-D-glucosamine biosynthesis; UDP-N-acetyl-alpha-D-glucosamine from N-acetyl-alpha-D-glucosamine 1-phosphate: step 1/1. It participates in bacterial outer membrane biogenesis; LPS lipid A biosynthesis. Its function is as follows. Catalyzes the last two sequential reactions in the de novo biosynthetic pathway for UDP-N-acetylglucosamine (UDP-GlcNAc). The C-terminal domain catalyzes the transfer of acetyl group from acetyl coenzyme A to glucosamine-1-phosphate (GlcN-1-P) to produce N-acetylglucosamine-1-phosphate (GlcNAc-1-P), which is converted into UDP-GlcNAc by the transfer of uridine 5-monophosphate (from uridine 5-triphosphate), a reaction catalyzed by the N-terminal domain. This is Bifunctional protein GlmU from Helicobacter hepaticus (strain ATCC 51449 / 3B1).